We begin with the raw amino-acid sequence, 127 residues long: Acetylcholine receptor subunit alpha (127 aa).

Over 1–127 the chain is Extracellular; it reads ADGIFAIDQF…YFIVNVIIPC (127 aa). Cysteines 33 and 47 form a disulfide. N-linked (GlcNAc...) asparagine glycans are attached at residues asparagine 46 and asparagine 94. Cysteine 97 and cysteine 98 form a disulfide bridge.

It belongs to the ligand-gated ion channel (TC 1.A.9) family. Acetylcholine receptor (TC 1.A.9.1) subfamily. Alpha-1/CHRNA1 sub-subfamily. One of the alpha chains that assemble within the acetylcholine receptor, a pentamer of two alpha chains, a beta, a delta, and a gamma or epsilon chains.

It is found in the postsynaptic cell membrane. Its subcellular location is the cell membrane. It carries out the reaction K(+)(in) = K(+)(out). The enzyme catalyses Na(+)(in) = Na(+)(out). Functionally, upon acetylcholine binding, the AChR responds by an extensive change in conformation that affects all subunits and leads to opening of an ion-conducting channel across the plasma membrane. Does not bind alpha-bungarotoxin. The sequence is that of Acetylcholine receptor subunit alpha (CHRNA1) from Natrix tessellata (Dice snake).